Reading from the N-terminus, the 169-residue chain is 6,7-dimethyl-8-ribityllumazine synthase (169 aa).

5-amino-6-(D-ribitylamino)uracil is bound by residues Trp-27, Ser-61–Glu-63, and Val-90–Ile-92. Ser-95–Thr-96 serves as a coordination point for (2S)-2-hydroxy-3-oxobutyl phosphate. The Proton donor role is filled by His-98. Phe-123 lines the 5-amino-6-(D-ribitylamino)uracil pocket. Arg-137 serves as a coordination point for (2S)-2-hydroxy-3-oxobutyl phosphate.

The protein belongs to the DMRL synthase family. As to quaternary structure, homopentamer.

The protein resides in the mitochondrion intermembrane space. The enzyme catalyses (2S)-2-hydroxy-3-oxobutyl phosphate + 5-amino-6-(D-ribitylamino)uracil = 6,7-dimethyl-8-(1-D-ribityl)lumazine + phosphate + 2 H2O + H(+). It functions in the pathway cofactor biosynthesis; riboflavin biosynthesis; riboflavin from 2-hydroxy-3-oxobutyl phosphate and 5-amino-6-(D-ribitylamino)uracil: step 1/2. Functionally, catalyzes the formation of 6,7-dimethyl-8-ribityllumazine by condensation of 5-amino-6-(D-ribitylamino)uracil with 3,4-dihydroxy-2-butanone 4-phosphate. This is the penultimate step in the biosynthesis of riboflavin. The polypeptide is 6,7-dimethyl-8-ribityllumazine synthase (RIB4) (Saccharomyces cerevisiae (strain ATCC 204508 / S288c) (Baker's yeast)).